A 379-amino-acid polypeptide reads, in one-letter code: tRNA-specific 2-thiouridylase MnmA (379 aa).

Residues 16–23 and methionine 42 each bind ATP; that span reads GLSGGVDS. The tract at residues 102–104 is interaction with target base in tRNA; it reads NPD. Cysteine 107 acts as the Nucleophile in catalysis. Cysteines 107 and 204 form a disulfide. Glycine 131 lines the ATP pocket. The segment at 154-156 is interaction with tRNA; the sequence is KDQ. The active-site Cysteine persulfide intermediate is cysteine 204. Positions 316–317 are interaction with tRNA; sequence RY.

The protein belongs to the MnmA/TRMU family.

The protein localises to the cytoplasm. The catalysed reaction is S-sulfanyl-L-cysteinyl-[protein] + uridine(34) in tRNA + AH2 + ATP = 2-thiouridine(34) in tRNA + L-cysteinyl-[protein] + A + AMP + diphosphate + H(+). Functionally, catalyzes the 2-thiolation of uridine at the wobble position (U34) of tRNA, leading to the formation of s(2)U34. This chain is tRNA-specific 2-thiouridylase MnmA, found in Hydrogenovibrio crunogenus (strain DSM 25203 / XCL-2) (Thiomicrospira crunogena).